A 105-amino-acid chain; its full sequence is Large ribosomal subunit protein bL21c (105 aa).

Belongs to the bacterial ribosomal protein bL21 family. Part of the 50S ribosomal subunit.

The protein localises to the plastid. Its subcellular location is the chloroplast. Functionally, this protein binds to 23S rRNA. This Thalassiosira pseudonana (Marine diatom) protein is Large ribosomal subunit protein bL21c.